A 498-amino-acid polypeptide reads, in one-letter code: ATP synthase subunit beta, chloroplastic (498 aa).

Position 172–179 (172–179 (GGAGVGKT)) interacts with ATP.

The protein belongs to the ATPase alpha/beta chains family. In terms of assembly, F-type ATPases have 2 components, CF(1) - the catalytic core - and CF(0) - the membrane proton channel. CF(1) has five subunits: alpha(3), beta(3), gamma(1), delta(1), epsilon(1). CF(0) has four main subunits: a(1), b(1), b'(1) and c(9-12).

The protein localises to the plastid. It localises to the chloroplast thylakoid membrane. It carries out the reaction ATP + H2O + 4 H(+)(in) = ADP + phosphate + 5 H(+)(out). Functionally, produces ATP from ADP in the presence of a proton gradient across the membrane. The catalytic sites are hosted primarily by the beta subunits. The protein is ATP synthase subunit beta, chloroplastic of Whiteheadia bifolia (Elephants ears).